The chain runs to 358 residues: Core-capsid bridging protein (358 aa).

Residues 296-331 (PSITPTPGYRGTTFKPSRTRSTRRRRSVRRRSRRTA) form a disordered region. Residues 312 to 329 (SRTRSTRRRRSVRRRSRR) are compositionally biased toward basic residues.

The protein belongs to the adenoviridae core-capsid bridging protein family. As to quaternary structure, monomer. Homodimer. Exists in equilibrium between monomers and dimers in solution. Interacts with the histone-like nucleoprotein; this interactions bridge the virus core to the capsid. Interacts with core protein X; this interactions bridge the virus core to the capsid. Interacts with the endosome lysis protein VI; this interactions bridge the virus core to the capsid. Interacts with the peripentonal hexons. Interacts with host NPM1; this interaction might play a role in virus assembly.

The protein resides in the virion. It localises to the host nucleus. Its subcellular location is the host nucleolus. Functionally, associates loosely with the viral DNA to form an outer shell around the nucleoprotein-DNA complex and links it with the capsid by binding the endosome lysis protein. Dissociates from the viral genome during entry. Might be involved in nuclear capsid assembly of the viral particles through its association with NPM1/nucleophosmin. The polypeptide is Core-capsid bridging protein (Human adenovirus F serotype 40 (HAdV-40)).